We begin with the raw amino-acid sequence, 395 residues long: Phosphopentomutase (395 aa).

Residues Asp-14, Asp-289, His-294, Asp-330, His-331, and His-342 each contribute to the Mn(2+) site.

Belongs to the phosphopentomutase family. The cofactor is Mn(2+).

The protein localises to the cytoplasm. The catalysed reaction is 2-deoxy-alpha-D-ribose 1-phosphate = 2-deoxy-D-ribose 5-phosphate. It carries out the reaction alpha-D-ribose 1-phosphate = D-ribose 5-phosphate. It functions in the pathway carbohydrate degradation; 2-deoxy-D-ribose 1-phosphate degradation; D-glyceraldehyde 3-phosphate and acetaldehyde from 2-deoxy-alpha-D-ribose 1-phosphate: step 1/2. Isomerase that catalyzes the conversion of deoxy-ribose 1-phosphate (dRib-1-P) and ribose 1-phosphate (Rib-1-P) to deoxy-ribose 5-phosphate (dRib-5-P) and ribose 5-phosphate (Rib-5-P), respectively. The chain is Phosphopentomutase from Mycoplasmopsis pulmonis (strain UAB CTIP) (Mycoplasma pulmonis).